The following is a 95-amino-acid chain: DNA-binding protein CENSYa_1764 (95 aa).

A disordered region spans residues 1 to 21 (MSYTDPDDSLPEHVPGEAEMS).

Belongs to the PDCD5 family.

The sequence is that of DNA-binding protein CENSYa_1764 from Cenarchaeum symbiosum (strain A).